We begin with the raw amino-acid sequence, 419 residues long: Haloacid dehalogenase-like hydrolase domain-containing 5 (419 aa).

The first 15 residues, Met1–His15, serve as a signal peptide directing secretion.

It belongs to the HAD-like hydrolase superfamily.

The protein is Haloacid dehalogenase-like hydrolase domain-containing 5 of Mus musculus (Mouse).